A 612-amino-acid chain; its full sequence is tRNA 5-methylaminomethyl-2-thiouridine biosynthesis bifunctional protein MnmC (612 aa).

Residues 1 to 218 (MITFRGDGLY…KREILEASLE (218 aa)) form a tRNA (mnm(5)s(2)U34)-methyltransferase region. An FAD-dependent cmnm(5)s(2)U34 oxidoreductase region spans residues 244–612 (IGAGVAGLAA…VRKLKRGLVR (369 aa)).

This sequence in the N-terminal section; belongs to the methyltransferase superfamily. tRNA (mnm(5)s(2)U34)-methyltransferase family. The protein in the C-terminal section; belongs to the DAO family. FAD serves as cofactor.

It is found in the cytoplasm. It catalyses the reaction 5-aminomethyl-2-thiouridine(34) in tRNA + S-adenosyl-L-methionine = 5-methylaminomethyl-2-thiouridine(34) in tRNA + S-adenosyl-L-homocysteine + H(+). Its function is as follows. Catalyzes the last two steps in the biosynthesis of 5-methylaminomethyl-2-thiouridine (mnm(5)s(2)U) at the wobble position (U34) in tRNA. Catalyzes the FAD-dependent demodification of cmnm(5)s(2)U34 to nm(5)s(2)U34, followed by the transfer of a methyl group from S-adenosyl-L-methionine to nm(5)s(2)U34, to form mnm(5)s(2)U34. The chain is tRNA 5-methylaminomethyl-2-thiouridine biosynthesis bifunctional protein MnmC from Campylobacter fetus subsp. fetus (strain 82-40).